A 389-amino-acid chain; its full sequence is Na(+)/H(+) antiporter NhaA (389 aa).

11 helical membrane passes run 14–34, 59–79, 95–115, 124–144, 154–174, 177–197, 213–233, 261–281, 290–310, 328–348, and 363–383; these read AGGI…NSPL, LLLW…GLEV, SLPS…YLLF, AGWA…MALL, VFLL…IALF, SDLS…LVGL, LILW…GVII, FLIL…NMSL, IGIA…FSFI, IAPV…IASL, and LGTL…LSKV.

Belongs to the NhaA Na(+)/H(+) (TC 2.A.33) antiporter family.

It localises to the cell inner membrane. The enzyme catalyses Na(+)(in) + 2 H(+)(out) = Na(+)(out) + 2 H(+)(in). Functionally, na(+)/H(+) antiporter that extrudes sodium in exchange for external protons. The sequence is that of Na(+)/H(+) antiporter NhaA from Shewanella sp. (strain W3-18-1).